The primary structure comprises 345 residues: Platelet-derived growth factor C (345 aa).

Positions 1-22 are cleaved as a signal peptide; that stretch reads MSLFGLLLLTSALAGQRQGTQA. 2 N-linked (GlcNAc...) asparagine glycosylation sites follow: Asn-25 and Asn-55. The CUB domain occupies 46 to 163; the sequence is HERIITVSTN…PGFCIHYNIV (118 aa). Intrachain disulfides connect Cys-104-Cys-124, Cys-250-Cys-294, Cys-280-Cys-335, and Cys-287-Cys-337.

This sequence belongs to the PDGF/VEGF growth factor family. In terms of assembly, homodimer; disulfide-linked. Interacts with PDGFRA homodimers, and with heterodimers formed by PDGFRA and PDGFRB. Interacts (via CUB domain) with PLAT (via kringle domain). Proteolytic removal of the N-terminal CUB domain releasing the core domain is necessary for unmasking the receptor-binding epitopes of the core domain. Cleavage after basic residues in the hinge region (region connecting the CUB and growth factor domains) gives rise to the receptor-binding form. Cleaved by PLAT and PLG. Post-translationally, sumoylated with SUMO1. In terms of processing, N-glycosylated. In terms of tissue distribution, expressed in the fallopian tube, vascular smooth muscle cells in kidney, breast and colon and in visceral smooth muscle of the gastrointestinal tract. Highly expressed in retinal pigment epithelia. Expressed in medulloblastoma. In the kidney, constitutively expressed in parietal epithelial cells of Bowman's capsule, tubular epithelial cells and in arterial endothelial cells (at protein level). Highly expressed in the platelets, prostate, testis and uterus. Higher expression is observed in uterine leiomyomata. Weaker expression in the spleen, thymus, heart, pancreas, liver, ovary cells and small intestine, and negligible expression in the colon and peripheral blood leukocytes.

It localises to the cytoplasm. The protein resides in the cytosol. The protein localises to the secreted. It is found in the nucleus. Its subcellular location is the cytoplasmic granule. It localises to the cell membrane. Growth factor that plays an essential role in the regulation of embryonic development, cell proliferation, cell migration, survival and chemotaxis. Potent mitogen and chemoattractant for cells of mesenchymal origin. Required for normal skeleton formation during embryonic development, especially for normal development of the craniofacial skeleton and for normal development of the palate. Required for normal skin morphogenesis during embryonic development. Plays an important role in wound healing, where it appears to be involved in three stages: inflammation, proliferation and remodeling. Plays an important role in angiogenesis and blood vessel development. Involved in fibrotic processes, in which transformation of interstitial fibroblasts into myofibroblasts plus collagen deposition occurs. The CUB domain has mitogenic activity in coronary artery smooth muscle cells, suggesting a role beyond the maintenance of the latency of the PDGF domain. In the nucleus, PDGFC seems to have additional function. The chain is Platelet-derived growth factor C (PDGFC) from Homo sapiens (Human).